The primary structure comprises 409 residues: Argininosuccinate synthase (409 aa).

ATP is bound by residues 8 to 16 and Ala34; that span reads AYSGGLDTS. An L-citrulline-binding site is contributed by Tyr85. Gly115 is an ATP binding site. Residues Thr117, Asn121, and Asp122 each coordinate L-aspartate. Asn121 contacts L-citrulline. L-citrulline contacts are provided by Arg125, Ser178, Ser187, Glu268, and Tyr280.

The protein belongs to the argininosuccinate synthase family. Type 1 subfamily. In terms of assembly, homotetramer.

It localises to the cytoplasm. The enzyme catalyses L-citrulline + L-aspartate + ATP = 2-(N(omega)-L-arginino)succinate + AMP + diphosphate + H(+). The protein operates within amino-acid biosynthesis; L-arginine biosynthesis; L-arginine from L-ornithine and carbamoyl phosphate: step 2/3. The chain is Argininosuccinate synthase from Thermotoga maritima (strain ATCC 43589 / DSM 3109 / JCM 10099 / NBRC 100826 / MSB8).